The primary structure comprises 693 residues: ATP-dependent DNA helicase RecG (693 aa).

Residues 48–146 form a wedge domain region; it reads THLYPIGELL…GDLSTPELQE (99 aa). The Helicase ATP-binding domain occupies 283-448; sequence DMALDVPMMR…AYADLDTSVI (166 aa). An ATP-binding site is contributed by 296–303; it reads GDVGSGKT. The DEAH box signature appears at 397-400; that stretch reads DEQH. In terms of domain architecture, Helicase C-terminal spans 482 to 628; the sequence is EGRQAYWVCT…GFVIAQKDLE (147 aa).

Belongs to the helicase family. RecG subfamily. Monomer in solution. Probably a monomer on HJ DNA. Binding to fork DNA is facilitated by SSB; the proteins do not seem to stably associate. Mg(2+) serves as cofactor.

It catalyses the reaction Couples ATP hydrolysis with the unwinding of duplex DNA by translocating in the 3'-5' direction.. It carries out the reaction ATP + H2O = ADP + phosphate + H(+). Plays a critical role in recombination and DNA repair. Helps process Holliday junction (HJ) intermediates to mature products by catalyzing branch migration. Has replication fork regression activity, unwinds stalled or blocked replication forks to make a HJ that can be resolved by RuvC or RusA. Also rewinds unwound dsDNA in an ATP-dependent manner. Has double-stranded (ds)DNA unwinding activity characteristic of a DNA helicase with 3'-5' polarity in vitro on linear dsDNA; branched duplex DNA (Y-DNA) substrates adopt different conformations that influence which of the two arms are unwound. Binds and unwinds HJ and Y-DNA but not linear duplex DNA; binds no more than 10 nucleotides of ssDNA at a fork. Has a role in constitutive stable DNA replication (cSDR, DNA replication in the absence of protein synthesis) and R-loop (RNA annealed with dsDNA) formation. Unwinds R-loops but not RNA:DNA hybrids. Is genetically synergistic to RadA and RuvABC. The polypeptide is ATP-dependent DNA helicase RecG (Escherichia coli (strain K12)).